A 141-amino-acid chain; its full sequence is Small ribosomal subunit protein uS11 (141 aa).

The protein belongs to the universal ribosomal protein uS11 family. Part of the 30S ribosomal subunit.

In terms of biological role, located on the platform of the 30S subunit. The chain is Small ribosomal subunit protein uS11 from Pyrobaculum calidifontis (strain DSM 21063 / JCM 11548 / VA1).